A 181-amino-acid chain; its full sequence is Oligoribonuclease (181 aa).

The Exonuclease domain occupies L8 to L171. Y129 is a catalytic residue.

It belongs to the oligoribonuclease family.

It localises to the cytoplasm. Functionally, 3'-to-5' exoribonuclease specific for small oligoribonucleotides. The polypeptide is Oligoribonuclease (Aeromonas hydrophila subsp. hydrophila (strain ATCC 7966 / DSM 30187 / BCRC 13018 / CCUG 14551 / JCM 1027 / KCTC 2358 / NCIMB 9240 / NCTC 8049)).